A 705-amino-acid chain; its full sequence is Catalase C (705 aa).

The disordered stretch occupies residues 1-31; the sequence is MAKKPSAPNNTKPATIHDQKATRGNGGELHQ. Residues histidine 88 and asparagine 161 contribute to the active site. Residue tyrosine 375 coordinates heme.

Belongs to the catalase family. HPII subfamily. Heme serves as cofactor.

It catalyses the reaction 2 H2O2 = O2 + 2 H2O. Its function is as follows. Decomposes hydrogen peroxide into water and oxygen; serves to protect cells from the toxic effects of hydrogen peroxide. Could protect cells in nodules which have a high potential to produce hydrogen peroxide because of the strong reducing conditions required for nitrogen fixation and the action of several proteins. The protein is Catalase C (katE) of Rhizobium meliloti (strain 1021) (Ensifer meliloti).